Here is a 90-residue protein sequence, read N- to C-terminus: Antitoxin epsilon 1 (90 aa).

The protein belongs to the epsilon antitoxin family. As to quaternary structure, in the presence of the zeta toxin, forms an inactive PezA(2)PezT(2) heterotetramer.

Its function is as follows. Antitoxin component of a type II toxin-antitoxin (TA) system. Neutralizes the toxic effect of zeta toxin. Part of a postsegregational killing (PSK) system involved in the killing of plasmid-free cells. Continuous synthesis of the epsilon antitoxin is required to counteract the zeta toxin. This chain is Antitoxin epsilon 1, found in Enterococcus faecalis (Streptococcus faecalis).